Reading from the N-terminus, the 368-residue chain is UDP-N-acetylglucosamine--N-acetylmuramyl-(pentapeptide) pyrophosphoryl-undecaprenol N-acetylglucosamine transferase (368 aa).

UDP-N-acetyl-alpha-D-glucosamine contacts are provided by residues 13 to 15 (TGG), Asn-127, Arg-168, Ser-200, Ile-254, and Gln-299.

It belongs to the glycosyltransferase 28 family. MurG subfamily.

Its subcellular location is the cell inner membrane. It carries out the reaction di-trans,octa-cis-undecaprenyl diphospho-N-acetyl-alpha-D-muramoyl-L-alanyl-D-glutamyl-meso-2,6-diaminopimeloyl-D-alanyl-D-alanine + UDP-N-acetyl-alpha-D-glucosamine = di-trans,octa-cis-undecaprenyl diphospho-[N-acetyl-alpha-D-glucosaminyl-(1-&gt;4)]-N-acetyl-alpha-D-muramoyl-L-alanyl-D-glutamyl-meso-2,6-diaminopimeloyl-D-alanyl-D-alanine + UDP + H(+). It functions in the pathway cell wall biogenesis; peptidoglycan biosynthesis. Its function is as follows. Cell wall formation. Catalyzes the transfer of a GlcNAc subunit on undecaprenyl-pyrophosphoryl-MurNAc-pentapeptide (lipid intermediate I) to form undecaprenyl-pyrophosphoryl-MurNAc-(pentapeptide)GlcNAc (lipid intermediate II). This is UDP-N-acetylglucosamine--N-acetylmuramyl-(pentapeptide) pyrophosphoryl-undecaprenol N-acetylglucosamine transferase from Parabacteroides distasonis (strain ATCC 8503 / DSM 20701 / CIP 104284 / JCM 5825 / NCTC 11152).